Consider the following 24-residue polypeptide: Ascaphin-3 (24 aa).

Expressed by the skin glands.

It localises to the secreted. Antimicrobial peptide that shows higher potency against Gram-negative bacteria than against Gram-positive bacteria. Has a very week hemolytic activity. This Ascaphus truei (Coastal tailed frog) protein is Ascaphin-3.